A 290-amino-acid polypeptide reads, in one-letter code: Protein male abnormal 3 (290 aa).

2 DNA-binding regions (DM) span residues 28–74 and 94–142; these read CQRC…SKKK and CARC…KLRR. Disordered regions lie at residues 139-167 and 179-202; these read KLRRSQQKSRDGKEPKRNSRRKSKDMDME and IIGTSASPSPSSTTDTMSPSLSMS. Over residues 146 to 155 the composition is skewed to basic and acidic residues; the sequence is KSRDGKEPKR. A compositionally biased stretch (low complexity) spans 182 to 202; sequence TSASPSPSSTTDTMSPSLSMS.

Expression is undetectable in hermaphrodites, but persists in males. In males, expressed in cells of the tail tip.

The protein resides in the nucleus. Functionally, transcription factor which binds the DNA motif 5'-[CGA][TCA][TA]ACAATGT[AT][TGA]C-3', probably as a monomer. Acts partially redundantly with the transcription factor dmd-3 to coordinate tail tip cell fusion and retraction and thereby regulate male tail tip morphogenesis. Promotes male-specific development of two tissues, the peripheral nervous system and the intestine. In the peripheral nervous system, directs differentiation of sensory ray neuroblasts into peripheral sense organs. In the intestine, causes repression of vitellogenin gene transcription. The polypeptide is Protein male abnormal 3 (Caenorhabditis elegans).